The following is a 378-amino-acid chain: Mannitol-1-phosphate 5-dehydrogenase (378 aa).

4–15 is an NAD(+) binding site; that stretch reads SVHFGAGNIGRG.

This sequence belongs to the mannitol dehydrogenase family.

It catalyses the reaction D-mannitol 1-phosphate + NAD(+) = beta-D-fructose 6-phosphate + NADH + H(+). The polypeptide is Mannitol-1-phosphate 5-dehydrogenase (Streptococcus pneumoniae (strain CGSP14)).